The following is a 670-amino-acid chain: Major fimbrium tip subunit FimD (670 aa).

A signal peptide spans Met1–Gly24. A lipid anchor (N-palmitoyl cysteine) is attached at Cys25. Cys25 carries S-diacylglycerol cysteine lipidation. The propeptide occupies Cys25 to Arg50.

The protein belongs to the FimD family. As to quaternary structure, fimbriae are composed of a major, structural subunit and the minor components FimC, FimD and FimE. Identified in a complex composed of FimC, FimD and FimE (in vitro). The complex interacts with host extracellular matrix proteins, including fibronectin and type I collagen. Interacts with host CXCR4.

It localises to the fimbrium. Its subcellular location is the cell outer membrane. Probably a component of the fimbrium tip. These long, filamentous pili are attached to the cell surface; they mediate biofilm formation, adhesion onto host cells and onto other bacteria that are part of the oral microbiome. They play an important role in invasion of periodontal tissues and are major virulence factors. FimC, FimD and FimE contribute to interaction with host CXCR4 and thereby down-regulate the TLR2-mediated host immune response. The protein is Major fimbrium tip subunit FimD of Porphyromonas gingivalis (strain ATCC 33277 / DSM 20709 / CIP 103683 / JCM 12257 / NCTC 11834 / 2561).